The sequence spans 366 residues: uncharacterized protein (366 aa).

This is an uncharacterized protein from Caenorhabditis elegans.